The sequence spans 198 residues: V-type proton ATPase subunit E (198 aa).

It belongs to the V-ATPase E subunit family.

Produces ATP from ADP in the presence of a proton gradient across the membrane. The sequence is that of V-type proton ATPase subunit E from Borrelia turicatae (strain 91E135).